The chain runs to 1391 residues: DNA-directed RNA polymerase subunit beta'' (1391 aa).

The Zn(2+) site is built by Cys220, Cys291, Cys298, and Cys301.

It belongs to the RNA polymerase beta' chain family. RpoC2 subfamily. As to quaternary structure, in plastids the minimal PEP RNA polymerase catalytic core is composed of four subunits: alpha, beta, beta', and beta''. When a (nuclear-encoded) sigma factor is associated with the core the holoenzyme is formed, which can initiate transcription. Zn(2+) serves as cofactor.

The protein localises to the plastid. The protein resides in the chloroplast. It catalyses the reaction RNA(n) + a ribonucleoside 5'-triphosphate = RNA(n+1) + diphosphate. DNA-dependent RNA polymerase catalyzes the transcription of DNA into RNA using the four ribonucleoside triphosphates as substrates. This Gossypium barbadense (Sea Island cotton) protein is DNA-directed RNA polymerase subunit beta''.